Reading from the N-terminus, the 118-residue chain is UPF0102 protein NE0711 (118 aa).

The protein belongs to the UPF0102 family.

This chain is UPF0102 protein NE0711, found in Nitrosomonas europaea (strain ATCC 19718 / CIP 103999 / KCTC 2705 / NBRC 14298).